A 424-amino-acid polypeptide reads, in one-letter code: Elongation factor 1-alpha (424 aa).

The 219-residue stretch at lysine 5–valine 223 folds into the tr-type G domain. A G1 region spans residues glycine 14–serine 21. Residue glycine 14–serine 21 coordinates GTP. Serine 21 lines the Mg(2+) pocket. The G2 stretch occupies residues glycine 70 to aspartate 74. Residues aspartate 91 to glycine 94 form a G3 region. GTP contacts are provided by residues aspartate 91–histidine 95 and asparagine 146–aspartate 149. The interval asparagine 146–aspartate 149 is G4. A G5 region spans residues serine 187–tyrosine 189.

It belongs to the TRAFAC class translation factor GTPase superfamily. Classic translation factor GTPase family. EF-Tu/EF-1A subfamily.

The protein localises to the cytoplasm. It carries out the reaction GTP + H2O = GDP + phosphate + H(+). GTP hydrolase that promotes the GTP-dependent binding of aminoacyl-tRNA to the A-site of ribosomes during protein biosynthesis. The protein is Elongation factor 1-alpha of Methanothrix thermoacetophila (strain DSM 6194 / JCM 14653 / NBRC 101360 / PT) (Methanosaeta thermophila).